The primary structure comprises 293 residues: 4-hydroxy-tetrahydrodipicolinate synthase (293 aa).

Residue Thr44 coordinates pyruvate. Catalysis depends on Tyr132, which acts as the Proton donor/acceptor. Lys161 functions as the Schiff-base intermediate with substrate in the catalytic mechanism. Position 203 (Ile203) interacts with pyruvate.

The protein belongs to the DapA family. In terms of assembly, homotetramer; dimer of dimers.

Its subcellular location is the cytoplasm. The catalysed reaction is L-aspartate 4-semialdehyde + pyruvate = (2S,4S)-4-hydroxy-2,3,4,5-tetrahydrodipicolinate + H2O + H(+). It functions in the pathway amino-acid biosynthesis; L-lysine biosynthesis via DAP pathway; (S)-tetrahydrodipicolinate from L-aspartate: step 3/4. Functionally, catalyzes the condensation of (S)-aspartate-beta-semialdehyde [(S)-ASA] and pyruvate to 4-hydroxy-tetrahydrodipicolinate (HTPA). The chain is 4-hydroxy-tetrahydrodipicolinate synthase from Sulfurihydrogenibium sp. (strain YO3AOP1).